We begin with the raw amino-acid sequence, 360 residues long: Phospho-N-acetylmuramoyl-pentapeptide-transferase (360 aa).

10 helical membrane passes run glycine 27–leucine 47, threonine 71–alanine 91, leucine 93–phenylalanine 113, phenylalanine 128–isoleucine 148, phenylalanine 168–glycine 188, glycine 199–serine 219, leucine 239–proline 259, alanine 262–valine 282, isoleucine 288–valine 308, and glutamine 337–leucine 357.

This sequence belongs to the glycosyltransferase 4 family. MraY subfamily. It depends on Mg(2+) as a cofactor.

Its subcellular location is the cell inner membrane. It carries out the reaction UDP-N-acetyl-alpha-D-muramoyl-L-alanyl-gamma-D-glutamyl-meso-2,6-diaminopimeloyl-D-alanyl-D-alanine + di-trans,octa-cis-undecaprenyl phosphate = di-trans,octa-cis-undecaprenyl diphospho-N-acetyl-alpha-D-muramoyl-L-alanyl-D-glutamyl-meso-2,6-diaminopimeloyl-D-alanyl-D-alanine + UMP. Its pathway is cell wall biogenesis; peptidoglycan biosynthesis. Catalyzes the initial step of the lipid cycle reactions in the biosynthesis of the cell wall peptidoglycan: transfers peptidoglycan precursor phospho-MurNAc-pentapeptide from UDP-MurNAc-pentapeptide onto the lipid carrier undecaprenyl phosphate, yielding undecaprenyl-pyrophosphoryl-MurNAc-pentapeptide, known as lipid I. This chain is Phospho-N-acetylmuramoyl-pentapeptide-transferase, found in Brucella anthropi (strain ATCC 49188 / DSM 6882 / CCUG 24695 / JCM 21032 / LMG 3331 / NBRC 15819 / NCTC 12168 / Alc 37) (Ochrobactrum anthropi).